Reading from the N-terminus, the 465-residue chain is Adenosylhomocysteinase (465 aa).

Residues threonine 56, aspartate 131, and glutamate 191 each contribute to the substrate site. An NAD(+)-binding site is contributed by 192-194 (TTT). Lysine 221 and aspartate 225 together coordinate substrate. NAD(+) is bound by residues asparagine 226, 255-260 (GYGNVG), glutamate 278, asparagine 313, 334-336 (IGH), and asparagine 379.

This sequence belongs to the adenosylhomocysteinase family. It depends on NAD(+) as a cofactor.

The protein resides in the cytoplasm. It carries out the reaction S-adenosyl-L-homocysteine + H2O = L-homocysteine + adenosine. The protein operates within amino-acid biosynthesis; L-homocysteine biosynthesis; L-homocysteine from S-adenosyl-L-homocysteine: step 1/1. Its function is as follows. May play a key role in the regulation of the intracellular concentration of adenosylhomocysteine. The sequence is that of Adenosylhomocysteinase from Bartonella quintana (strain Toulouse) (Rochalimaea quintana).